The chain runs to 157 residues: Transcription elongation factor GreA (157 aa).

Residues 1-75 (MSKEIILTQE…VETLINRAKV (75 aa)) are a coiled coil.

Belongs to the GreA/GreB family.

Functionally, necessary for efficient RNA polymerase transcription elongation past template-encoded arresting sites. The arresting sites in DNA have the property of trapping a certain fraction of elongating RNA polymerases that pass through, resulting in locked ternary complexes. Cleavage of the nascent transcript by cleavage factors such as GreA or GreB allows the resumption of elongation from the new 3'terminus. GreA releases sequences of 2 to 3 nucleotides. The sequence is that of Transcription elongation factor GreA from Mycoplasma mycoides subsp. mycoides SC (strain CCUG 32753 / NCTC 10114 / PG1).